Here is a 163-residue protein sequence, read N- to C-terminus: HTH-type transcriptional regulator IscR (163 aa).

Residues 2-131 (RLTSKGRYAV…NNITLGELVN (130 aa)) enclose the HTH rrf2-type domain. A DNA-binding region (H-T-H motif) is located at residues 28-51 (LADISERQGISLSYLEQLFSRLRK). Residues cysteine 92, cysteine 98, and cysteine 104 each contribute to the [2Fe-2S] cluster site. The span at 140–149 (DRQHTHDAPR) shows a compositional bias: basic and acidic residues. Residues 140 to 163 (DRQHTHDAPRSTRTQDAIDVKLRA) form a disordered region.

It depends on [2Fe-2S] cluster as a cofactor.

Its function is as follows. Regulates the transcription of several operons and genes involved in the biogenesis of Fe-S clusters and Fe-S-containing proteins. In Citrobacter koseri (strain ATCC BAA-895 / CDC 4225-83 / SGSC4696), this protein is HTH-type transcriptional regulator IscR.